The following is a 65-amino-acid chain: DNA-directed RNA polymerase subunit omega (65 aa).

This sequence belongs to the RNA polymerase subunit omega family. As to quaternary structure, the RNAP catalytic core consists of 2 alpha, 1 beta, 1 beta' and 1 omega subunit. When a sigma factor is associated with the core the holoenzyme is formed, which can initiate transcription.

It catalyses the reaction RNA(n) + a ribonucleoside 5'-triphosphate = RNA(n+1) + diphosphate. Its function is as follows. Promotes RNA polymerase assembly. Latches the N- and C-terminal regions of the beta' subunit thereby facilitating its interaction with the beta and alpha subunits. This chain is DNA-directed RNA polymerase subunit omega, found in Baumannia cicadellinicola subsp. Homalodisca coagulata.